The following is a 589-amino-acid chain: Phenylalanine--tRNA ligase beta subunit (589 aa).

The B5 domain occupies 302-377 (LEVREERISV…IAYGYNNIKK (76 aa)). The Mg(2+) site is built by Asp355, Asp361, Glu364, and Asp365.

Belongs to the phenylalanyl-tRNA synthetase beta subunit family. Type 2 subfamily. Tetramer of two alpha and two beta subunits. Mg(2+) serves as cofactor.

It localises to the cytoplasm. The catalysed reaction is tRNA(Phe) + L-phenylalanine + ATP = L-phenylalanyl-tRNA(Phe) + AMP + diphosphate + H(+). In Drosophila melanogaster (Fruit fly), this protein is Phenylalanine--tRNA ligase beta subunit.